Here is a 355-residue protein sequence, read N- to C-terminus: MAFGGAQASYINPVVPFTGMIQGGLQDGHKITIIGAVLPSGGNRFAVNLQTGYNDSDIAFHFNPRFEEGGYVVCNTKQRGSWGTEERKMHMPFQRGCSFELCFQVQSSDFRVMVNGNLFTQYAHRVPFHRIDAISITGVVQLSSISFQNIRAAPKQPACSKVQFSQAVCLPPRPRGRKSNPPGIWPANSAPIAQTFVHTIHSAPGQMFPNPVIPPAVYPNPVYQLPFFTSILGGLYPSKSILVSGTILPSAQRFYINLRSGSDIAFHLNPRFNENAVVRNTQINGSWGSEERSLPRGMPFFRGQSFSVWIMCEGHCFKVAVDSQHLFEYHHRLKNLPAINNLEVGGDIQLTHVQT.

Galectin domains lie at 17–148 (FTGM…ISFQ) and 227–355 (FFTS…HVQT). Residues N48, H61, R65, N75, 82–88 (WGTEERK), H267, R271, T281, and 287–293 (WGSEERS) contribute to the a beta-D-galactoside site.

The protein localises to the cytoplasm. The protein resides in the nucleus. It is found in the secreted. Its function is as follows. Binds galactosides. Has high affinity for the Forssman pentasaccharide. Ligand for HAVCR2/TIM3. Binding to HAVCR2 induces T-helper type 1 lymphocyte (Th1) death. Also stimulates bactericidal activity in infected macrophages by causing macrophage activation and IL1B secretion which restricts intracellular bacterial growth. Ligand for P4HB; the interaction retains P4HB at the cell surface of Th2 T helper cells, increasing disulfide reductase activity at the plasma membrane, altering the plasma membrane redox state and enhancing cell migration. Ligand for CD44; the interaction enhances binding of SMAD3 to the FOXP3 promoter, leading to up-regulation of FOXP3 expression and increased induced regulatory T (iTreg) cell stability and suppressive function. Promotes ability of mesenchymal stromal cells to suppress T-cell proliferation. Expands regulatory T-cells and induces cytotoxic T-cell apoptosis following virus infection. Activates ERK1/2 phosphorylation inducing cytokine (IL-6, IL-8, IL-12) and chemokine (CCL2) production in mast and dendritic cells. Inhibits degranulation and induces apoptosis of mast cells. Induces maturation and migration of dendritic cells. Inhibits natural killer (NK) cell function. Can transform NK cell phenotype from peripheral to decidual during pregnancy. Astrocyte derived galectin-9 enhances microglial TNF production. May play a role in thymocyte-epithelial interactions relevant to the biology of the thymus. May provide the molecular basis for urate flux across cell membranes, allowing urate that is formed during purine metabolism to efflux from cells and serving as an electrogenic transporter that plays an important role in renal and gastrointestinal urate excretion. Highly selective to the anion urate. The sequence is that of Galectin-9 (LGALS9) from Bos taurus (Bovine).